The primary structure comprises 585 residues: Polyadenylate-binding protein, cytoplasmic and nuclear (585 aa).

A disordered region spans residues 14 to 37 (QLKIEEQTAPTTTESETPKVETSG). RRM domains lie at 38–116 (ASLY…WSQR), 126–203 (GNIY…LHVS), 219–296 (TNVY…RAQK), and 322–399 (VNLF…IAQR). A PABC domain is found at 488-567 (GQFPRNGQQQ…AHAAYQKFKE (80 aa)).

It belongs to the polyadenylate-binding protein type-1 family.

The protein localises to the cytoplasm. Its subcellular location is the nucleus. Binds the poly(A) tail of mRNA. Appears to be an important mediator of the multiple roles of the poly(A) tail in mRNA biogenesis, stability and translation. In the nucleus, involved in both mRNA cleavage and polyadenylation. Is also required for efficient mRNA export to the cytoplasm. Acts in concert with a poly(A)-specific nuclease (PAN) to affect poly(A) tail shortening, which may occur concomitantly with either nucleocytoplasmic mRNA transport or translational initiation. In the cytoplasm, stimulates translation initiation and regulates mRNA decay through translation termination-coupled poly(A) shortening, probably mediated by PAN. In Eremothecium gossypii (strain ATCC 10895 / CBS 109.51 / FGSC 9923 / NRRL Y-1056) (Yeast), this protein is Polyadenylate-binding protein, cytoplasmic and nuclear (PAB1).